We begin with the raw amino-acid sequence, 821 residues long: Leucine--tRNA ligase (821 aa).

Residues 40–50 carry the 'HIGH' region motif; that stretch reads PYPSGRIHMGH. Residues 586–590 carry the 'KMSKS' region motif; it reads KMSKS. Lys-589 lines the ATP pocket.

Belongs to the class-I aminoacyl-tRNA synthetase family.

The protein localises to the cytoplasm. It catalyses the reaction tRNA(Leu) + L-leucine + ATP = L-leucyl-tRNA(Leu) + AMP + diphosphate. This is Leucine--tRNA ligase from Aliarcobacter butzleri (strain RM4018) (Arcobacter butzleri).